A 286-amino-acid chain; its full sequence is ATP synthase gamma chain (286 aa).

It belongs to the ATPase gamma chain family. As to quaternary structure, F-type ATPases have 2 components, CF(1) - the catalytic core - and CF(0) - the membrane proton channel. CF(1) has five subunits: alpha(3), beta(3), gamma(1), delta(1), epsilon(1). CF(0) has three main subunits: a, b and c.

Its subcellular location is the cell inner membrane. Its function is as follows. Produces ATP from ADP in the presence of a proton gradient across the membrane. The gamma chain is believed to be important in regulating ATPase activity and the flow of protons through the CF(0) complex. The polypeptide is ATP synthase gamma chain (Pseudomonas entomophila (strain L48)).